The chain runs to 283 residues: Protein BASIC PENTACYSTEINE5 (283 aa).

Positions 51–86 (AVKERNEAVAATKEALASRDEALEQRDKALSERDNA) are alanine-zipper. A coiled-coil region spans residues 63 to 89 (KEALASRDEALEQRDKALSERDNAIME). The interval 122–176 (EESHLPNPSPISTIPPEAANTRPTKRKKESKQGKKMGEDLNRPVASPGKKSRKDW) is disordered. Basic and acidic residues predominate over residues 151–162 (SKQGKKMGEDLN).

Belongs to the BBR/BPC family. In terms of assembly, homodimer. Heterodimer. In terms of tissue distribution, expressed in seedlings, leaves and pistils.

Its subcellular location is the nucleus. Its function is as follows. Transcriptional regulator that specifically binds to GA-rich elements (GAGA-repeats) present in regulatory sequences of genes involved in developmental processes. The chain is Protein BASIC PENTACYSTEINE5 (BPC5) from Arabidopsis thaliana (Mouse-ear cress).